The chain runs to 447 residues: Argininosuccinate synthase (447 aa).

Residues 17–25 (AFSGGLDTS) and alanine 43 contribute to the ATP site. Tyrosine 99 is an L-citrulline binding site. The ATP site is built by glycine 129 and threonine 131. Residues threonine 131, asparagine 135, and aspartate 136 each coordinate L-aspartate. Asparagine 135 lines the L-citrulline pocket. Residue aspartate 136 participates in ATP binding. Arginine 139 and serine 192 together coordinate L-citrulline. Aspartate 194 is an ATP binding site. L-citrulline contacts are provided by threonine 201, glutamate 203, and glutamate 280.

The protein belongs to the argininosuccinate synthase family. Type 2 subfamily. In terms of assembly, homotetramer.

It localises to the cytoplasm. The catalysed reaction is L-citrulline + L-aspartate + ATP = 2-(N(omega)-L-arginino)succinate + AMP + diphosphate + H(+). It functions in the pathway amino-acid biosynthesis; L-arginine biosynthesis; L-arginine from L-ornithine and carbamoyl phosphate: step 2/3. The sequence is that of Argininosuccinate synthase from Janthinobacterium sp. (strain Marseille) (Minibacterium massiliensis).